Here is a 107-residue protein sequence, read N- to C-terminus: Large ribosomal subunit protein uL24 (107 aa).

The protein belongs to the universal ribosomal protein uL24 family. As to quaternary structure, part of the 50S ribosomal subunit.

One of two assembly initiator proteins, it binds directly to the 5'-end of the 23S rRNA, where it nucleates assembly of the 50S subunit. Functionally, one of the proteins that surrounds the polypeptide exit tunnel on the outside of the subunit. This Streptomyces griseus subsp. griseus (strain JCM 4626 / CBS 651.72 / NBRC 13350 / KCC S-0626 / ISP 5235) protein is Large ribosomal subunit protein uL24.